A 434-amino-acid chain; its full sequence is Serine hydroxymethyltransferase 2 (434 aa).

(6S)-5,6,7,8-tetrahydrofolate-binding positions include Leu136 and 140–142 (GHL). Lys245 bears the N6-(pyridoxal phosphate)lysine mark.

Belongs to the SHMT family. In terms of assembly, homodimer. It depends on pyridoxal 5'-phosphate as a cofactor.

The protein resides in the cytoplasm. The enzyme catalyses (6R)-5,10-methylene-5,6,7,8-tetrahydrofolate + glycine + H2O = (6S)-5,6,7,8-tetrahydrofolate + L-serine. It functions in the pathway one-carbon metabolism; tetrahydrofolate interconversion. It participates in amino-acid biosynthesis; glycine biosynthesis; glycine from L-serine: step 1/1. In terms of biological role, catalyzes the reversible interconversion of serine and glycine with tetrahydrofolate (THF) serving as the one-carbon carrier. This reaction serves as the major source of one-carbon groups required for the biosynthesis of purines, thymidylate, methionine, and other important biomolecules. Also exhibits THF-independent aldolase activity toward beta-hydroxyamino acids, producing glycine and aldehydes, via a retro-aldol mechanism. This Rhodopseudomonas palustris (strain ATCC BAA-98 / CGA009) protein is Serine hydroxymethyltransferase 2.